A 65-amino-acid chain; its full sequence is Muscarinic m1-toxin2 (65 aa).

Intrachain disulfides connect Cys3–Cys24, Cys17–Cys42, Cys46–Cys57, and Cys58–Cys63.

It belongs to the three-finger toxin family. Short-chain subfamily. Aminergic toxin sub-subfamily. As to quaternary structure, monomer. In terms of tissue distribution, expressed by the venom gland.

It is found in the secreted. In terms of biological role, binds irreversibly and specifically to M1 (CHRM1) muscarinic acetylcholine receptors, blocking further binding of antagonists and preventing the action of agonists. The protein is Muscarinic m1-toxin2 of Dendroaspis angusticeps (Eastern green mamba).